Consider the following 763-residue polypeptide: Xaa-Pro dipeptidyl-peptidase (763 aa).

Catalysis depends on charge relay system residues Ser-349, Asp-469, and His-499.

Belongs to the peptidase S15 family. Homodimer.

It localises to the cytoplasm. It carries out the reaction Hydrolyzes Xaa-Pro-|- bonds to release unblocked, N-terminal dipeptides from substrates including Ala-Pro-|-p-nitroanilide and (sequentially) Tyr-Pro-|-Phe-Pro-|-Gly-Pro-|-Ile.. Functionally, removes N-terminal dipeptides sequentially from polypeptides having unsubstituted N-termini provided that the penultimate residue is proline. This is Xaa-Pro dipeptidyl-peptidase from Streptococcus macedonicus (Streptococcus gallolyticus macedonicus).